The primary structure comprises 371 residues: Fe(3+) ions import ATP-binding protein FbpC (371 aa).

The 231-residue stretch at 5–235 (IKIENAQKRY…PANLFVATFI (231 aa)) folds into the ABC transporter domain. 37–44 (GPSGCGKT) is a binding site for ATP.

The protein belongs to the ABC transporter superfamily. Fe(3+) ion importer (TC 3.A.1.10) family. As to quaternary structure, the complex is composed of two ATP-binding proteins (FbpC), two transmembrane proteins (FbpB) and a solute-binding protein (FbpA).

Its subcellular location is the cell inner membrane. It catalyses the reaction Fe(3+)(out) + ATP + H2O = Fe(3+)(in) + ADP + phosphate + H(+). Its function is as follows. Part of the ABC transporter complex FbpABC involved in Fe(3+) ions import. Responsible for energy coupling to the transport system. The chain is Fe(3+) ions import ATP-binding protein FbpC from Fusobacterium nucleatum subsp. nucleatum (strain ATCC 25586 / DSM 15643 / BCRC 10681 / CIP 101130 / JCM 8532 / KCTC 2640 / LMG 13131 / VPI 4355).